Reading from the N-terminus, the 290-residue chain is MFKGSIVAIVTPFNKGVVDEKKLRELVEFQIAGGTDAIVPCGTTGESSTLDYEEHDRVIEIVVQQVNKRVPVIAGTGSNSTREAIEMTEHAKQLGADGALLVTPYYNKPTQEGLYRHYMAVAEAVALPQILYNVPGRTGVNLLPETVARLAEHKNIVAIKEATGSLQQASEVLALCGDKIDVLCGDDFITFPMMACGAKGVISVVANIMPKEVAALVDAFFAGKMEEARQWHLKLLKISNAMFIESNPVPVKTAVGLMGKASDEVRLPLAPMSDANKNKLISVMKEYKLI.

Residue T44 participates in pyruvate binding. The active-site Proton donor/acceptor is the Y132. The active-site Schiff-base intermediate with substrate is the K160. I202 contributes to the pyruvate binding site.

Belongs to the DapA family. In terms of assembly, homotetramer; dimer of dimers.

The protein localises to the cytoplasm. The enzyme catalyses L-aspartate 4-semialdehyde + pyruvate = (2S,4S)-4-hydroxy-2,3,4,5-tetrahydrodipicolinate + H2O + H(+). Its pathway is amino-acid biosynthesis; L-lysine biosynthesis via DAP pathway; (S)-tetrahydrodipicolinate from L-aspartate: step 3/4. Functionally, catalyzes the condensation of (S)-aspartate-beta-semialdehyde [(S)-ASA] and pyruvate to 4-hydroxy-tetrahydrodipicolinate (HTPA). This is 4-hydroxy-tetrahydrodipicolinate synthase from Geotalea daltonii (strain DSM 22248 / JCM 15807 / FRC-32) (Geobacter daltonii).